Here is a 539-residue protein sequence, read N- to C-terminus: CTP synthase (539 aa).

The interval 1–268 (MSFKCIFLTG…STFITEKLGL (268 aa)) is amidoligase domain. Ser14 serves as a coordination point for CTP. Residue Ser14 coordinates UTP. Residue 15 to 20 (SLGKGL) participates in ATP binding. L-glutamine is bound at residue Tyr55. Asp72 lines the ATP pocket. Mg(2+) is bound by residues Asp72 and Glu142. CTP is bound by residues 149-151 (DIE), 188-193 (KTKPTQ), and Lys224. Residues 188-193 (KTKPTQ) and Lys224 each bind UTP. One can recognise a Glutamine amidotransferase type-1 domain in the interval 294–533 (RIGLVGKYVQ…IQAAILYSRN (240 aa)). Residue Gly353 coordinates L-glutamine. Cys380 serves as the catalytic Nucleophile; for glutamine hydrolysis. Residues 381–384 (LGMQ), Glu404, and Arg461 contribute to the L-glutamine site. Catalysis depends on residues His506 and Glu508.

This sequence belongs to the CTP synthase family. Homotetramer.

It catalyses the reaction UTP + L-glutamine + ATP + H2O = CTP + L-glutamate + ADP + phosphate + 2 H(+). It carries out the reaction L-glutamine + H2O = L-glutamate + NH4(+). The catalysed reaction is UTP + NH4(+) + ATP = CTP + ADP + phosphate + 2 H(+). Its pathway is pyrimidine metabolism; CTP biosynthesis via de novo pathway; CTP from UDP: step 2/2. Allosterically activated by GTP, when glutamine is the substrate; GTP has no effect on the reaction when ammonia is the substrate. The allosteric effector GTP functions by stabilizing the protein conformation that binds the tetrahedral intermediate(s) formed during glutamine hydrolysis. Inhibited by the product CTP, via allosteric rather than competitive inhibition. Catalyzes the ATP-dependent amination of UTP to CTP with either L-glutamine or ammonia as the source of nitrogen. Regulates intracellular CTP levels through interactions with the four ribonucleotide triphosphates. The chain is CTP synthase from Chlamydia felis (strain Fe/C-56) (Chlamydophila felis).